The following is a 164-amino-acid chain: ATP synthase subunit b (164 aa).

A helical membrane pass occupies residues 8-28 (FGIIFWQTITLLFVLFILGKF).

This sequence belongs to the ATPase B chain family. As to quaternary structure, F-type ATPases have 2 components, F(1) - the catalytic core - and F(0) - the membrane proton channel. F(1) has five subunits: alpha(3), beta(3), gamma(1), delta(1), epsilon(1). F(0) has three main subunits: a(1), b(2) and c(10-14). The alpha and beta chains form an alternating ring which encloses part of the gamma chain. F(1) is attached to F(0) by a central stalk formed by the gamma and epsilon chains, while a peripheral stalk is formed by the delta and b chains.

Its subcellular location is the cell membrane. F(1)F(0) ATP synthase produces ATP from ADP in the presence of a proton or sodium gradient. F-type ATPases consist of two structural domains, F(1) containing the extramembraneous catalytic core and F(0) containing the membrane proton channel, linked together by a central stalk and a peripheral stalk. During catalysis, ATP synthesis in the catalytic domain of F(1) is coupled via a rotary mechanism of the central stalk subunits to proton translocation. Its function is as follows. Component of the F(0) channel, it forms part of the peripheral stalk, linking F(1) to F(0). The chain is ATP synthase subunit b from Amoebophilus asiaticus (strain 5a2).